A 179-amino-acid chain; its full sequence is Large ribosomal subunit protein uL5 (179 aa).

The protein belongs to the universal ribosomal protein uL5 family. In terms of assembly, part of the 50S ribosomal subunit; part of the 5S rRNA/L5/L18/L25 subcomplex. Contacts the 5S rRNA and the P site tRNA. Forms a bridge to the 30S subunit in the 70S ribosome.

This is one of the proteins that bind and probably mediate the attachment of the 5S RNA into the large ribosomal subunit, where it forms part of the central protuberance. In the 70S ribosome it contacts protein S13 of the 30S subunit (bridge B1b), connecting the 2 subunits; this bridge is implicated in subunit movement. Contacts the P site tRNA; the 5S rRNA and some of its associated proteins might help stabilize positioning of ribosome-bound tRNAs. In Idiomarina loihiensis (strain ATCC BAA-735 / DSM 15497 / L2-TR), this protein is Large ribosomal subunit protein uL5.